The chain runs to 196 residues: Charged multivesicular body protein 1a (196 aa).

At methionine 1 the chain carries N-acetylmethionine. Residues 5-47 (LFQLKFTAKQLEKLAKKAEKDSKAEQAKVKKALLQKNVECARV) are a coiled coil. Serine 101 carries the phosphoserine modification. Residues 102 to 124 (TMDLQKVSSVMDRFEQQVQNLDV) are a coiled coil. Phosphoserine is present on serine 173. The interval 173 to 196 (SAVGESSVRSQEDQLSRRLAALRN) is disordered. Positions 185-195 (DQLSRRLAALR) match the MIT-interacting motif motif.

It belongs to the SNF7 family. As to quaternary structure, probable peripherally associated component of the endosomal sorting required for transport complex III (ESCRT-III). ESCRT-III components are thought to multimerize to form a flat lattice on the perimeter membrane of the endosome. Several assembly forms of ESCRT-III may exist that interact and act sequentially. Self-associates. Interacts with CHMP1B. Interacts with VPS4A. Interacts with VPS4B. Interacts with PHF1. Interacts with IST1. Interacts with MITD1. In terms of tissue distribution, expressed in placenta, cultured skin fibroblasts and in osteoblast cell line MG-63.

The protein localises to the cytoplasm. Its subcellular location is the endosome membrane. It is found in the nucleus matrix. In terms of biological role, probable peripherally associated component of the endosomal sorting required for transport complex III (ESCRT-III) which is involved in multivesicular bodies (MVBs) formation and sorting of endosomal cargo proteins into MVBs. MVBs contain intraluminal vesicles (ILVs) that are generated by invagination and scission from the limiting membrane of the endosome and mostly are delivered to lysosomes enabling degradation of membrane proteins, such as stimulated growth factor receptors, lysosomal enzymes and lipids. The MVB pathway appears to require the sequential function of ESCRT-O, -I,-II and -III complexes. ESCRT-III proteins mostly dissociate from the invaginating membrane before the ILV is released. The ESCRT machinery also functions in topologically equivalent membrane fission events, such as the terminal stages of cytokinesis and the budding of enveloped viruses (HIV-1 and other lentiviruses). ESCRT-III proteins are believed to mediate the necessary vesicle extrusion and/or membrane fission activities, possibly in conjunction with the AAA ATPase VPS4. Involved in cytokinesis. Involved in recruiting VPS4A and/or VPS4B to the midbody of dividing cells. May also be involved in chromosome condensation. Targets the Polycomb group (PcG) protein BMI1/PCGF4 to regions of condensed chromatin. May play a role in stable cell cycle progression and in PcG gene silencing. This chain is Charged multivesicular body protein 1a (CHMP1A), found in Homo sapiens (Human).